The primary structure comprises 405 residues: Threonine synthase (405 aa).

Position 106 is an N6-(pyridoxal phosphate)lysine (Lys106). Pyridoxal 5'-phosphate contacts are provided by residues Asn132, Gly233 to Asn237, and Thr371.

Belongs to the threonine synthase family. The cofactor is pyridoxal 5'-phosphate.

It catalyses the reaction O-phospho-L-homoserine + H2O = L-threonine + phosphate. Its pathway is amino-acid biosynthesis; L-threonine biosynthesis; L-threonine from L-aspartate: step 5/5. Functionally, catalyzes the gamma-elimination of phosphate from L-phosphohomoserine and the beta-addition of water to produce L-threonine. The sequence is that of Threonine synthase (thrC) from Methanocaldococcus jannaschii (strain ATCC 43067 / DSM 2661 / JAL-1 / JCM 10045 / NBRC 100440) (Methanococcus jannaschii).